We begin with the raw amino-acid sequence, 144 residues long: Vasopressin-neurophysin 2-copeptin (144 aa).

Cys-1 and Cys-6 are oxidised to a cystine. A Glycine amide modification is found at Gly-9. 7 cysteine pairs are disulfide-bonded: Cys-22/Cys-66, Cys-25/Cys-39, Cys-33/Cys-56, Cys-40/Cys-46, Cys-73/Cys-85, Cys-79/Cys-97, and Cys-86/Cys-91. Asn-112 carries an N-linked (GlcNAc...) asparagine glycan.

It belongs to the vasopressin/oxytocin family. In terms of assembly, interacts with vasopressin receptors V1bR/AVPR1B (Ki=85 pM), V1aR/AVPR1A (Ki=0.6 nM) and V2R/AVPR2 (Ki=4.9 nM). Interacts with oxytocin receptor (OXTR) (Ki=110 nM).

It is found in the secreted. In terms of biological role, neurophysin 2 specifically binds vasopressin. Functionally, vasopressin has a direct antidiuretic action on the kidney, it also causes vasoconstriction of the peripheral vessels. Acts by binding to vasopressin receptors (V1bR/AVPR1B, V1aR/AVPR1A, and V2R/AVPR2). The polypeptide is Vasopressin-neurophysin 2-copeptin (AVP) (Cavia porcellus (Guinea pig)).